A 185-amino-acid chain; its full sequence is Elongation factor P (185 aa).

Belongs to the elongation factor P family.

The protein localises to the cytoplasm. It participates in protein biosynthesis; polypeptide chain elongation. Functionally, involved in peptide bond synthesis. Stimulates efficient translation and peptide-bond synthesis on native or reconstituted 70S ribosomes in vitro. Probably functions indirectly by altering the affinity of the ribosome for aminoacyl-tRNA, thus increasing their reactivity as acceptors for peptidyl transferase. The polypeptide is Elongation factor P (Geobacillus kaustophilus (strain HTA426)).